A 579-amino-acid chain; its full sequence is ATP-dependent RNA helicase ROK1 (579 aa).

The disordered stretch occupies residues 1-99; it reads MDIFRVLTRG…DHADDETELS (99 aa). Positions 45–59 are enriched in basic and acidic residues; that stretch reads ARDEQQLTKELDFFR. The span at 76–97 shows a compositional bias: acidic residues; that stretch reads GEDEVQEDNQEEDEDHADDETE. The Q motif motif lies at 133 to 161; the sequence is DLITRFQFDKRLLNNLIENNFTEPTPIQS. One can recognise a Helicase ATP-binding domain in the interval 164-344; the sequence is IPILLHERDM…QTIMNDPIRV (181 aa). 177 to 184 lines the ATP pocket; it reads APTGSGKT. A DEAD box motif is present at residues 291 to 294; sequence DEAD. In terms of domain architecture, Helicase C-terminal spans 355–517; that stretch reads NIDQQLVFCG…EVSEWMQKIS (163 aa). Over residues 520 to 538 the composition is skewed to basic and acidic residues; it reads SKREKESLKKGKGHVERKQ. The interval 520–579 is disordered; that stretch reads SKREKESLKKGKGHVERKQISTVPKVVKQKKRQRREMIEASKKRKLSVSDAEEEAGNDST. Positions 569–579 are enriched in acidic residues; that stretch reads DAEEEAGNDST.

Belongs to the DEAD box helicase family. DDX52/ROK1 subfamily. As to quaternary structure, interacts with the U3 snoRNA and is associated with the 90S and 40S pre-ribosomes.

The protein localises to the nucleus. It is found in the nucleolus. It carries out the reaction ATP + H2O = ADP + phosphate + H(+). Functionally, ATP-dependent RNA helicase involved in 40S ribosomal subunit biogenesis. Required for the processing and cleavage of 35S pre-rRNA at sites A0, A1, and A2, leading to mature 18S rRNA. In Kluyveromyces lactis (strain ATCC 8585 / CBS 2359 / DSM 70799 / NBRC 1267 / NRRL Y-1140 / WM37) (Yeast), this protein is ATP-dependent RNA helicase ROK1 (ROK1).